Reading from the N-terminus, the 56-residue chain is Chymotrypsin inhibitor (56 aa).

5 disulfide bridges follow: Cys3–Cys36, Cys12–Cys32, Cys16–Cys28, Cys20–Cys56, and Cys38–Cys50. Positions 3-56 constitute a TIL domain; that stretch reads CGPNEVFNTCGSACAPTCAQPKTRICTMQCRIGCQCQEGFLRNGEGACVLPENC.

Belongs to the serine protease inhibitor-like (TIL domain-containing) family.

Its subcellular location is the secreted. Functionally, chymotrypsin and cathepsin G inhibitor. The chain is Chymotrypsin inhibitor from Apis mellifera (Honeybee).